The primary structure comprises 78 residues: Defensin beta 136 (78 aa).

The first 21 residues, 1–21, serve as a signal peptide directing secretion; sequence MNLCLSALLFFLVILLPSGKG. 3 disulfides stabilise this stretch: Cys-33–Cys-60, Cys-40–Cys-54, and Cys-44–Cys-61.

Belongs to the beta-defensin family.

Its subcellular location is the secreted. Its function is as follows. Host defense peptide that exhibits antibacterial and antifungal activity. Exhibits antimicrobial activity against E.coli, S.aureus and C.albicans (in vitro). Has high lipopolysaccharide (LPS)-binding affinity, and may thereby be involved in immunoregulation through LPS neutralization. The polypeptide is Defensin beta 136 (DEFB136) (Homo sapiens (Human)).